The chain runs to 1183 residues: Translation initiation factor IF-2 (1183 aa).

2 disordered regions span residues 55 to 512 and 538 to 574; these read KSKT…KVHI and ASLARPSKPKVGKRNNGKPLTALKKRKKETTRQRQRR. Residues 83–99 are compositionally biased toward basic and acidic residues; it reads TQKDQKTEPKKKNHDQT. 2 stretches are compositionally biased toward polar residues: residues 100–143 and 165–177; these read ELSQ…QITA and KPLTQAESTIPQS. Over residues 220–229 the composition is skewed to basic and acidic residues; that stretch reads PKIDIQDKKP. Residues 231–252 are compositionally biased toward polar residues; sequence QPNNQKAKTRINQGEISPQKVG. Residues 253 to 267 are compositionally biased toward low complexity; that stretch reads QGNIQKIKSQNKQNQ. Residues 288–304 are compositionally biased toward basic and acidic residues; that stretch reads IRREKPVNKPHTNEVRN. 2 stretches are compositionally biased toward polar residues: residues 324 to 349 and 357 to 367; these read QGLSNRPGSNNKIGGTGRPGSQNRQG and NRTTQGQNRPG. The segment covering 485 to 499 has biased composition (basic and acidic residues); the sequence is GRPDWDDSAKLDALR. Composition is skewed to basic residues over residues 544 to 553 and 560 to 574; these read SKPKVGKRNN and LKKRKKETTRQRQRR. The region spanning 675 to 847 is the tr-type G domain; it reads RRPPVVTVMG…VLLVTEVEDL (173 aa). The segment at 684-691 is G1; it reads GHVDHGKT. 684–691 provides a ligand contact to GTP; the sequence is GHVDHGKT. Residues 709-713 are G2; it reads GITQH. The interval 734–737 is G3; that stretch reads DTPG. Residues 734–738 and 788–791 each bind GTP; these read DTPGH and NKID. A G4 region spans residues 788–791; the sequence is NKID. Residues 824–826 form a G5 region; that stretch reads SAI.

The protein belongs to the TRAFAC class translation factor GTPase superfamily. Classic translation factor GTPase family. IF-2 subfamily.

The protein localises to the cytoplasm. Functionally, one of the essential components for the initiation of protein synthesis. Protects formylmethionyl-tRNA from spontaneous hydrolysis and promotes its binding to the 30S ribosomal subunits. Also involved in the hydrolysis of GTP during the formation of the 70S ribosomal complex. The polypeptide is Translation initiation factor IF-2 (Prochlorococcus marinus (strain NATL1A)).